We begin with the raw amino-acid sequence, 156 residues long: SsrA-binding protein (156 aa).

This sequence belongs to the SmpB family.

It is found in the cytoplasm. Required for rescue of stalled ribosomes mediated by trans-translation. Binds to transfer-messenger RNA (tmRNA), required for stable association of tmRNA with ribosomes. tmRNA and SmpB together mimic tRNA shape, replacing the anticodon stem-loop with SmpB. tmRNA is encoded by the ssrA gene; the 2 termini fold to resemble tRNA(Ala) and it encodes a 'tag peptide', a short internal open reading frame. During trans-translation Ala-aminoacylated tmRNA acts like a tRNA, entering the A-site of stalled ribosomes, displacing the stalled mRNA. The ribosome then switches to translate the ORF on the tmRNA; the nascent peptide is terminated with the 'tag peptide' encoded by the tmRNA and targeted for degradation. The ribosome is freed to recommence translation, which seems to be the essential function of trans-translation. The polypeptide is SsrA-binding protein (Clostridium perfringens (strain 13 / Type A)).